Here is a 977-residue protein sequence, read N- to C-terminus: SGGFDFSFLPQPPQEKGPMGLMGPRGPPGASGAPGPQGFQGPAGEPGEPGQTGPAGARGPAGPPGKAGERGVVGPQGARGFPGTPGLPGFKGIRGHNGLDGLKGEPGAPGENGTPGQTGARGLPGERGRVGAPGPAGSRGSDGSVGPVGPAGPIGSAGPPGFPGAPGPKGELGPVGNTGPSGPAGPRGEQGLPGVSGPVGPPGNPGANGLTGAKGAAGLPGVAGAPGLPGPRGIPGPVSGATGARGLVGEPGPAGSKGESGGKGEPGSAGPQGPPGSSGEEGKRGPSGESGSTGPTGPPGLRGGPGSRGLPGADGRAGVIGPAGARGASGPAGVRGPSGDTGRPGEPGLMGARGLPGSPGNVGPAGKEGPAGLPGIDGRPGPIGPAGARGEAGNIGFPGPKGPAGDPGKAGEKGHAGLAGNRGAPGPDGNNGAQGPPGLQGVQGGKGEQGPAGPPGFQGLPGPAGTTGEAGKPGERGIPGEFGLPGPAGPRGERGPSGESGAVGPSGAIGSRGPSGPPGPDGNKGEPGVVGAPGTAGPAGSGGLPGERGAAGIPGGKGEKGETGLRGEVGTTGRDGARGAPGAVGAPGPAGATGDRGEAGAAGPAGPAGPRGGPGERGEVGPAGPNGFAGPAGAAGQPGAKGERGTKGPKGELGIVGPTGPVGSAGPAGPNGPAGPAGSRGDGGPPGLTGFPGAAGRTGPPGPSGITGPPGPPGAAGKEGLRGPRGDQGPVGRTGETGAGGPPGFTGEKGPSGEPGTAGPPGTAGPQGLLGAPGILGLPGSRGERGLPGVAGAVGEPGPLGIGPPGARGPSGAGVNGAPGEAGRDGNPGSDGPPGRDGLPGHKGERGAGNPGPVGAAGAPGPHGAVGPAGKHGNRGEPGPAGSVGPVGAVGPRGPSGPQGIRGDKGEAGDKGPRGLQGLPGLAGQHGDQGAPGPVGPAGPRGPAGPSGPPGKDGRTGHPGAVGPAGIRGSQGSQGPS.

A disordered region spans residues 1–977; it reads SGGFDFSFLP…RGSQGSQGPS (977 aa). 4-hydroxyproline occurs at positions 10, 13, 28, and 34. A compositionally biased stretch (low complexity) spans 17–66; the sequence is GPMGLMGPRGPPGASGAPGPQGFQGPAGEPGEPGQTGPAGARGPAGPPGK. K91 carries the post-translational modification 5-hydroxylysine; alternate. Residue K91 is glycosylated (O-linked (Gal...) hydroxylysine; alternate). Low complexity-rich tracts occupy residues 138–159 and 205–226; these read SRGS…SAGP and PGAN…AGAP. Over residues 258–267 the composition is skewed to gly residues; it reads GESGGKGEPG. Residues 268–278 show a composition bias toward low complexity; sequence SAGPQGPPGSS. Residues 300-309 show a composition bias toward gly residues; the sequence is GLRGGPGSRG. Residues 322–338 are compositionally biased toward low complexity; the sequence is PAGARGASGPAGVRGPS. P344 and P347 each carry 4-hydroxyproline. A compositionally biased stretch (low complexity) spans 373-392; the sequence is LPGIDGRPGPIGPAGARGEA. Positions 441-450 are enriched in gly residues; sequence GVQGGKGEQG. Composition is skewed to low complexity over residues 497 to 514 and 526 to 536; these read SGES…SRGP and EPGVVGAPGTA. Residues 537–546 are compositionally biased toward gly residues; the sequence is GPAGSGGLPG. 2 stretches are compositionally biased toward low complexity: residues 569–605 and 620–640; these read VGTT…AGPA and VGPA…QPGA. Residues 641–650 are compositionally biased toward basic and acidic residues; sequence KGERGTKGPK. Over residues 658-668 the composition is skewed to low complexity; sequence PTGPVGSAGPA. A compositionally biased stretch (gly residues) spans 678 to 687; that stretch reads GSRGDGGPPG. Positions 689–698 are enriched in low complexity; that stretch reads TGFPGAAGRT. Residues 735 to 744 are compositionally biased toward gly residues; it reads GETGAGGPPG. Low complexity-rich tracts occupy residues 752 to 779 and 787 to 797; these read SGEP…LGLP and LPGVAGAVGEP. Gly residues predominate over residues 798-817; it reads GPLGIGPPGARGPSGAGVNG. Low complexity-rich tracts occupy residues 853–871 and 878–898; these read PVGA…PAGK and PGPA…PSGP. Positions 902–913 are enriched in basic and acidic residues; sequence RGDKGEAGDKGP.

Belongs to the fibrillar collagen family. In terms of assembly, trimers of one alpha 2(I) and two alpha 1(I) chains. Interacts (via C-terminus) with TMEM131 (via PapD-L domain); the interaction is direct and is involved in assembly and TRAPPIII ER-to-Golgi transport complex-dependent secretion of collagen. In terms of processing, prolines at the third position of the tripeptide repeating unit (G-X-Y) are hydroxylated in some or all of the chains. In terms of tissue distribution, expressed in bones.

It localises to the secreted. It is found in the extracellular space. Its subcellular location is the extracellular matrix. Type I collagen is a member of group I collagen (fibrillar forming collagen). The sequence is that of Collagen alpha-2(I) chain from Scelidodon sp. (strain SLP-2019) (South American ground sloth).